A 425-amino-acid chain; its full sequence is CinA-like protein (425 aa).

Belongs to the CinA family.

The chain is CinA-like protein from Mycobacterium marinum (strain ATCC BAA-535 / M).